The chain runs to 429 residues: Serine/threonine-protein kinase BGLF4 (429 aa).

A disordered region spans residues 1–27 (MDVNMAAELSPTNSSSSGELSVSPEPP). The Protein kinase domain occupies 1–409 (MDVNMAAELS…CRPRFEHPHL (409 aa)). Residues 14 to 23 (SSSSGELSVS) show a composition bias toward low complexity. An SUMO interaction motif region spans residues 36–40 (KVTVI). Residues 110-118 (LYHELMVCD) and Glu128 contribute to the ATP site. Residue Asp195 is the Proton acceptor of the active site. Residues 344-350 (VVLLEVL) are SUMO interaction motif.

Belongs to the protein kinase superfamily. Ser/Thr protein kinase family. As to quaternary structure, interacts with host NUP62 and NUP153; this interaction plays a role in nuclear targeting of BGLF4. Interacts with host SUMO1 and SUMO2.

Its subcellular location is the virion tegument. The protein resides in the host nucleus. The catalysed reaction is L-seryl-[protein] + ATP = O-phospho-L-seryl-[protein] + ADP + H(+). The enzyme catalyses L-threonyl-[protein] + ATP = O-phospho-L-threonyl-[protein] + ADP + H(+). Plays many key roles by phosphorylating several proteins including the viral DNA processivity factor BMRF1, EBNA1 or EBNA2. Modifies the host nuclear envelope structure and induces the redistribution of nuclear envelope-associated proteins by phosphorylating host nucleoporins. Subsequently, promotes the nuclear transport of EBV lytic proteins. Required for efficient lytic DNA replication and release of nucleocapsids from the nucleus. Contributes to the compaction of host cell chromatin in cells undergoing lytic replication, presumably by phosphorylating the host condensin complex and host TOP2A. Induces disassembly of the nuclear lamina by phosphorylating with host LMNA. Phosphorylates substrates involved in capsid assembly and DNA packaging. Facilitates the switch from latent to lytic DNA replication by down-regulating EBNA1 replication function. Phosphorylates the viral immediate-early protein BZLF1 and inhibits its sumoylation by interacting with host SUMO1 and SUMO2. Phosphorylates also host SAMHD1 and thereby counteracts its antiviral effect by reducing its dNTP hydrolase activity. This chain is Serine/threonine-protein kinase BGLF4, found in Epstein-Barr virus (strain AG876) (HHV-4).